Consider the following 422-residue polypeptide: Tyrosine--tRNA ligase (422 aa).

Tyr36 provides a ligand contact to L-tyrosine. The 'HIGH' region signature appears at 41-50 (PTADSLHIGH). Residues Tyr175 and Gln179 each coordinate L-tyrosine. A 'KMSKS' region motif is present at residues 235–239 (KFGKT). Lys238 lines the ATP pocket. The S4 RNA-binding domain maps to 354–411 (TSLQEALTKSKLATSRSQARYFIKSNAITINAHKQSKIEYIFQDSDRIYNLYTLLKRG).

Belongs to the class-I aminoacyl-tRNA synthetase family. TyrS type 1 subfamily. Homodimer.

The protein localises to the cytoplasm. The enzyme catalyses tRNA(Tyr) + L-tyrosine + ATP = L-tyrosyl-tRNA(Tyr) + AMP + diphosphate + H(+). Catalyzes the attachment of tyrosine to tRNA(Tyr) in a two-step reaction: tyrosine is first activated by ATP to form Tyr-AMP and then transferred to the acceptor end of tRNA(Tyr). This Blochmanniella floridana protein is Tyrosine--tRNA ligase.